The primary structure comprises 538 residues: MAAEQDPEGRAAARPLLTDLYQATMALGYWRAGRAQDQAEFELFFRQCPFGGAFALAAGLRDCVRFLRAFRLRDADVQFLASALPPDTDPAFFEHLRALDCSGVTVRALPEGSLAFPGVPLLQVSGPLLVVQLLETPLLCLVSYASLIATNAARLRLIAGPDKRLLEMGLRRAQGPDGGLTASTYSYLGGFDASSNVLAGQLRGVPVAGTLAHSFVTSFSGSEVPPDPMLAPAAGQGSQVDLAASVEMWLERVCGHLGLGVQEPHRGERAAFVAYALAFPRAFQGLLDTYSVRRSGLPNFLAVALALQELGYQAVGVRLDSGDLLQQAREIRGVFRTAAAQFGVPWLQSVPIAVSNNIDEEELARLAQKGSEVNVIGIGTSVVTCPRQPSLGCVYKLVSVGGQPRMKLTEDPEKQTLPGSKAAFRLLGSDGSLLLDVLQLAEEPPPQAGQELRVWPRGARESRTVRPAHVEPLLRLWVQQGQLCEPLPSLAESRAFAQQSLHRLSPAHRRLEQPALYQVALSEKLQALVDRLSARGAL.

Tyrosine 21 and threonine 210 together coordinate nicotinate. At histidine 213 the chain carries Phosphohistidine. Nicotinate is bound at residue arginine 318. Position 380 (threonine 380) interacts with 5-phospho-alpha-D-ribose 1-diphosphate.

The protein belongs to the NAPRTase family. Homodimer. Requires Mg(2+) as cofactor. Mn(2+) serves as cofactor. In terms of processing, transiently phosphorylated on a His residue during the reaction cycle. Phosphorylation strongly increases the affinity for substrates and increases the rate of nicotinate D-ribonucleotide production. Dephosphorylation regenerates the low-affinity form of the enzyme, leading to product release.

The protein localises to the cytoplasm. Its subcellular location is the cytosol. The enzyme catalyses nicotinate + 5-phospho-alpha-D-ribose 1-diphosphate + ATP + H2O = nicotinate beta-D-ribonucleotide + ADP + phosphate + diphosphate. The protein operates within cofactor biosynthesis; NAD(+) biosynthesis; nicotinate D-ribonucleotide from nicotinate: step 1/1. Its function is as follows. Catalyzes the first step in the biosynthesis of NAD from nicotinic acid, the ATP-dependent synthesis of beta-nicotinate D-ribonucleotide from nicotinate and 5-phospho-D-ribose 1-phosphate. Helps prevent cellular oxidative stress via its role in NAD biosynthesis. This is Nicotinate phosphoribosyltransferase (NAPRT) from Bos taurus (Bovine).